Reading from the N-terminus, the 554-residue chain is Hydroxylamine reductase (554 aa).

Residues cysteine 3, cysteine 6, cysteine 18, and cysteine 25 each contribute to the [2Fe-2S] cluster site. Hybrid [4Fe-2O-2S] cluster-binding residues include histidine 252, glutamate 276, cysteine 320, cysteine 408, cysteine 436, cysteine 461, glutamate 495, and lysine 497. Cysteine 408 is modified (cysteine persulfide).

This sequence belongs to the HCP family. [2Fe-2S] cluster is required as a cofactor. Requires hybrid [4Fe-2O-2S] cluster as cofactor.

Its subcellular location is the cytoplasm. It carries out the reaction A + NH4(+) + H2O = hydroxylamine + AH2 + H(+). Catalyzes the reduction of hydroxylamine to form NH(3) and H(2)O. The chain is Hydroxylamine reductase from Shewanella putrefaciens (strain CN-32 / ATCC BAA-453).